The sequence spans 229 residues: Glutathione S-transferase 1 (229 aa).

In terms of domain architecture, GST N-terminal spans 2–86 (AQFTLWSHAH…YLADKYDTER (85 aa)). Positions 93-229 (DHPEYYKVIQ…FEERSKALDN (137 aa)) constitute a GST C-terminal domain.

Belongs to the GST superfamily.

It catalyses the reaction RX + glutathione = an S-substituted glutathione + a halide anion + H(+). Functionally, involved in the oxidative stress response and detoxification. This is Glutathione S-transferase 1 (gst1) from Schizosaccharomyces pombe (strain 972 / ATCC 24843) (Fission yeast).